Reading from the N-terminus, the 311-residue chain is Ribosomal protein L11 methyltransferase (311 aa).

Residues T160, G181, D203, and N246 each contribute to the S-adenosyl-L-methionine site.

Belongs to the methyltransferase superfamily. PrmA family.

It is found in the cytoplasm. It carries out the reaction L-lysyl-[protein] + 3 S-adenosyl-L-methionine = N(6),N(6),N(6)-trimethyl-L-lysyl-[protein] + 3 S-adenosyl-L-homocysteine + 3 H(+). Its function is as follows. Methylates ribosomal protein L11. This chain is Ribosomal protein L11 methyltransferase, found in Macrococcus caseolyticus (strain JCSC5402) (Macrococcoides caseolyticum).